We begin with the raw amino-acid sequence, 140 residues long: Biopolymer transport protein exbD1 (140 aa).

At 1-16 (MAFSSGNSGGPMADIN) the chain is on the cytoplasmic side. Residues 17–37 (VTPLVDVMLVLLIIFIITAPL) traverse the membrane as a helical segment. The Periplasmic portion of the chain corresponds to 38 to 140 (MSHKVKVELP…GFVATKEKGQ (103 aa)).

It belongs to the ExbD/TolR family. The accessory proteins ExbB and ExbD seem to form a complex with TonB.

The protein resides in the cell inner membrane. Functionally, involved in the TonB-dependent energy-dependent transport of various receptor-bound substrates. The polypeptide is Biopolymer transport protein exbD1 (exbD1) (Xanthomonas campestris pv. campestris (strain B100)).